Consider the following 600-residue polypeptide: Aspartate--tRNA(Asp/Asn) ligase (600 aa).

Glutamate 174 lines the L-aspartate pocket. An aspartate region spans residues 198-201; sequence QLFK. Arginine 220 provides a ligand contact to L-aspartate. ATP-binding positions include 220 to 222 and glutamine 229; that span reads RDE. Residue histidine 457 coordinates L-aspartate. ATP is bound at residue glutamate 491. An L-aspartate-binding site is contributed by arginine 498. 543–546 serves as a coordination point for ATP; the sequence is GLDR.

Belongs to the class-II aminoacyl-tRNA synthetase family. Type 1 subfamily. As to quaternary structure, homodimer.

The protein resides in the cytoplasm. It carries out the reaction tRNA(Asx) + L-aspartate + ATP = L-aspartyl-tRNA(Asx) + AMP + diphosphate. Its function is as follows. Aspartyl-tRNA synthetase with relaxed tRNA specificity since it is able to aspartylate not only its cognate tRNA(Asp) but also tRNA(Asn). Reaction proceeds in two steps: L-aspartate is first activated by ATP to form Asp-AMP and then transferred to the acceptor end of tRNA(Asp/Asn). The sequence is that of Aspartate--tRNA(Asp/Asn) ligase from Burkholderia cenocepacia (strain ATCC BAA-245 / DSM 16553 / LMG 16656 / NCTC 13227 / J2315 / CF5610) (Burkholderia cepacia (strain J2315)).